An 84-amino-acid polypeptide reads, in one-letter code: uncharacterized protein (84 aa).

The segment covering 1–14 (MQKLNKSSSKGKNN) has biased composition (low complexity). Residues 1-84 (MQKLNKSSSK…VDKGERKESE (84 aa)) are disordered. Over residues 28–40 (STYGFGPYGGGGF) the composition is skewed to gly residues. Composition is skewed to basic and acidic residues over residues 53–65 (DTKK…EEGT) and 73–84 (KLVDKGERKESE).

This is an uncharacterized protein from Schizosaccharomyces pombe (strain 972 / ATCC 24843) (Fission yeast).